The chain runs to 397 residues: UDP-galactose translocator (397 aa).

The tract at residues 1–21 is disordered; the sequence is MAAVGSGGSNAAAGPGAVSAG. Transmembrane regions (helical) follow at residues 3-23, 37-57, 65-85, 97-117, 140-160, 169-189, 200-220, 238-258, 269-289, and 315-335; these read AVGS…AGSL, YISL…IRYA, FFAT…CLLL, LALF…KLAV, TFQV…VLML, WASL…QAGG, GAGL…GVYF, LGLF…GTAV, PAVW…AVVV, and LFGF…IGAV. A compositionally biased stretch (low complexity) spans 9-21; sequence SNAAAGPGAVSAG. Residues 355–397 are disordered; the sequence is ASASTSGPCTHQQPPGQPPPPKLSSHRADLSTEPFLPKSVLVK.

Belongs to the nucleotide-sugar transporter family. SLC35A subfamily. As to quaternary structure, interacts with SLC35A3; the interaction is reduced in the presence of SLC35A4. Found in a complex with SLC35A3 and SLC35A4.

It localises to the golgi apparatus membrane. The enzyme catalyses UMP(out) + UDP-alpha-D-galactose(in) = UMP(in) + UDP-alpha-D-galactose(out). It catalyses the reaction UDP-N-acetyl-alpha-D-galactosamine(in) + UMP(out) = UDP-N-acetyl-alpha-D-galactosamine(out) + UMP(in). The catalysed reaction is UMP(out) + UDP-alpha-D-glucose(in) = UMP(in) + UDP-alpha-D-glucose(out). It carries out the reaction UMP(out) + UDP-N-acetyl-alpha-D-glucosamine(in) = UMP(in) + UDP-N-acetyl-alpha-D-glucosamine(out). The enzyme catalyses UDP-alpha-D-galactose(in) + AMP(out) = UDP-alpha-D-galactose(out) + AMP(in). It catalyses the reaction UDP-alpha-D-galactose(in) + CMP(out) = UDP-alpha-D-galactose(out) + CMP(in). The catalysed reaction is UDP-N-acetyl-alpha-D-galactosamine(out) + UDP-alpha-D-galactose(in) = UDP-N-acetyl-alpha-D-galactosamine(in) + UDP-alpha-D-galactose(out). It carries out the reaction UDP-N-acetyl-alpha-D-glucosamine(out) + UDP-alpha-D-galactose(in) = UDP-N-acetyl-alpha-D-glucosamine(in) + UDP-alpha-D-galactose(out). The enzyme catalyses UDP-alpha-D-galactose(in) + UDP-alpha-D-glucose(out) = UDP-alpha-D-galactose(out) + UDP-alpha-D-glucose(in). It catalyses the reaction UMP(out) + CMP(in) = UMP(in) + CMP(out). The catalysed reaction is UMP(out) + AMP(in) = UMP(in) + AMP(out). Transports uridine diphosphate galactose (UDP-galactose) from the cytosol into the Golgi apparatus, functioning as an antiporter that exchanges UDP-galactose for UMP. It is also able to exchange UDP-galactose for AMP and CMP, and to transport UDP-N-acetylgalactosamine (UDP-GalNAc) and other nucleotide sugars. As a provider of UDP-galactose to galactosyltransferases present in the Golgi apparatus, it is necessary for globotriaosylceramide/globoside (Gb3Cer) synthesis from lactosylceramide. This is UDP-galactose translocator from Canis lupus familiaris (Dog).